The sequence spans 275 residues: Spermidine/putrescine transport system permease protein PotB (275 aa).

A helical membrane pass occupies residues 1 to 21 (MIVTIVGWLVLFVFLPNLMII). Residues 22-60 (GTSFLTRDDASFVKMVFTLDNYTRLLDPLYFEVLLHSLN) lie on the Periplasmic side of the membrane. The 207-residue stretch at 55–261 (LLHSLNMALI…IVMGLMLLVY (207 aa)) folds into the ABC transmembrane type-1 domain. A helical transmembrane segment spans residues 61 to 81 (MALIATLACLVLGYPFAWFLA). At 82–89 (KLPHKVRP) the chain is on the cytoplasmic side. The helical transmembrane segment at 90–110 (LLLFLLIVPFWTNSLIRIYGL) threads the bilayer. Residues 111-135 (KIFLSTKGYLNEFLLWLGVIDTPIR) lie on the Periplasmic side of the membrane. The chain crosses the membrane as a helical span at residues 136–156 (IMFTPSAVIIGLVYILLPFMV). The Cytoplasmic segment spans residues 157-187 (MPLYSSIEKLDKPLLEAARDLGASKLQTFIR). Residues 188 to 208 (IIIPLTMPGIIAGCLLVMLPA) form a helical membrane-spanning segment. The Periplasmic segment spans residues 209–241 (MGLFYVSDLMGGAKNLLIGNVIKVQFLNIRDWP). Residues 242–262 (FGAATSITLTIVMGLMLLVYW) traverse the membrane as a helical segment. The Cytoplasmic segment spans residues 263 to 275 (RASRLLNKKVELE).

This sequence belongs to the binding-protein-dependent transport system permease family. CysTW subfamily.

The protein resides in the cell inner membrane. Required for the activity of the bacterial periplasmic transport system of putrescine and spermidine. In Escherichia coli (strain K12), this protein is Spermidine/putrescine transport system permease protein PotB (potB).